A 257-amino-acid chain; its full sequence is Homeobox protein EMX1 (257 aa).

The homeobox DNA-binding region spans 159–218 (PKRIRTAFSPSQLLRLERAFEKNHYVVGAERKQLAGSLSLSETQVKVWFQNRRTKYKRQK). Positions 216-257 (RQKLEEEGPESEQKKKGSHHINRWRIATKQANGEDIDVTSND) are disordered. A compositionally biased stretch (basic and acidic residues) spans 217-230 (QKLEEEGPESEQKK).

It belongs to the EMX homeobox family. As to quaternary structure, interacts with WRD11 (via the N-terminal and the central portion of the protein); the interaction associates EMX1 with GLI3. In terms of tissue distribution, cerebral cortex. Expressed in the olfactory bulbs.

It localises to the nucleus. In terms of biological role, transcription factor, which in cooperation with EMX2, acts to generate the boundary between the roof and archipallium in the developing brain. May function in combinations with OTX1/2 to specify cell fates in the developing central nervous system. The polypeptide is Homeobox protein EMX1 (Emx1) (Mus musculus (Mouse)).